The following is a 756-amino-acid chain: Photosystem I P700 chlorophyll a apoprotein A1 (756 aa).

The next 8 membrane-spanning stretches (helical) occupy residues 73–96, 159–182, 198–222, 298–316, 353–376, 392–418, 440–462, and 537–555; these read IFSA…FHGA, LYVT…FHYH, MNHH…HVSL, TAHH…GHMY, WHAQ…HHMY, LSLF…IYMV, AIIS…LYIH, and FLVH…LILL. [4Fe-4S] cluster-binding residues include C579 and C588. The next 2 membrane-spanning stretches (helical) occupy residues 595–616 and 670–692; these read HVFL…HFSW and LSAY…MFLF. H681 is a chlorophyll a' binding site. The chlorophyll a site is built by M689 and Y697. W698 is a phylloquinone binding site. A helical transmembrane segment spans residues 730 to 750; it reads AVGVAHYLLGGIATTWAFFLA.

The protein belongs to the PsaA/PsaB family. As to quaternary structure, the PsaA/B heterodimer binds the P700 chlorophyll special pair and subsequent electron acceptors. PSI consists of a core antenna complex that captures photons, and an electron transfer chain that converts photonic excitation into a charge separation. The cyanobacterial PSI reaction center is composed of one copy each of PsaA,B,C,D,E,F,I,J,K,L,M and X, and forms trimeric complexes. Requires PSI electron transfer chain: 5 chlorophyll a, 1 chlorophyll a', 2 phylloquinones and 3 4Fe-4S clusters. PSI core antenna: 90 chlorophyll a, 22 carotenoids, 3 phospholipids and 1 galactolipid. P700 is a chlorophyll a/chlorophyll a' dimer, A0 is one or more chlorophyll a, A1 is one or both phylloquinones and FX is a shared 4Fe-4S iron-sulfur center. as cofactor.

Its subcellular location is the cellular thylakoid membrane. The catalysed reaction is reduced [plastocyanin] + hnu + oxidized [2Fe-2S]-[ferredoxin] = oxidized [plastocyanin] + reduced [2Fe-2S]-[ferredoxin]. PsaA and PsaB bind P700, the primary electron donor of photosystem I (PSI), as well as the electron acceptors A0, A1 and FX. PSI is a plastocyanin/cytochrome c6-ferredoxin oxidoreductase, converting photonic excitation into a charge separation, which transfers an electron from the donor P700 chlorophyll pair to the spectroscopically characterized acceptors A0, A1, FX, FA and FB in turn. Oxidized P700 is reduced on the lumenal side of the thylakoid membrane by plastocyanin or cytochrome c6. The protein is Photosystem I P700 chlorophyll a apoprotein A1 of Cyanothece sp. (strain PCC 7425 / ATCC 29141).